Consider the following 353-residue polypeptide: Protein RecA (353 aa).

73 to 80 provides a ligand contact to ATP; it reads GPESSGKT.

This sequence belongs to the RecA family.

It localises to the cytoplasm. Its function is as follows. Can catalyze the hydrolysis of ATP in the presence of single-stranded DNA, the ATP-dependent uptake of single-stranded DNA by duplex DNA, and the ATP-dependent hybridization of homologous single-stranded DNAs. It interacts with LexA causing its activation and leading to its autocatalytic cleavage. The protein is Protein RecA of Bordetella avium (strain 197N).